The primary structure comprises 131 residues: Small ribosomal subunit protein bS6 (131 aa).

Residues 98-131 (EASPMVKAKDERRERRDDFANETADDAEAGDSEE) form a disordered region. Basic and acidic residues predominate over residues 104-116 (KAKDERRERRDDF). Acidic residues predominate over residues 120–131 (TADDAEAGDSEE).

The protein belongs to the bacterial ribosomal protein bS6 family.

Its function is as follows. Binds together with bS18 to 16S ribosomal RNA. This is Small ribosomal subunit protein bS6 from Salmonella dublin (strain CT_02021853).